Here is an 85-residue protein sequence, read N- to C-terminus: Kappa-theraphotoxin-Gr1a (85 aa).

The signal sequence occupies residues 1 to 21 (MKTSVFAAILGLALFAVLCSG). Positions 22–49 (SELQEKDLKETLLSAIMETALEAQPEER) are excised as a propeptide. Cystine bridges form between C51–C65, C58–C70, and C64–C77. The involved in active face stretch occupies residues 53-55 (YLF).

Belongs to the neurotoxin 10 (Hwtx-1) family. 09 (HaTx) subfamily. Expressed by the venom gland.

Its subcellular location is the secreted. In terms of biological role, inhibits Kv2.1/KCNB1 and Kv4.2/KCND2 voltage-gated potassium channels. Acts as a gating modifier by shifting channel openings to more depolarized voltages and acts via the occupancy of multiple binding sites on the channel. The toxin binding sites are situated on the S3-S4 extracellular linker of the channel. At least two hanatoxin molecules can occupy the Kv2.1/KCNB1 channel, and maybe more (three or four). Can also inhibit calcium channels (Cav2.1/CACNA1A). Needs to partition into the membrane in order to bind to the channel. The chain is Kappa-theraphotoxin-Gr1a from Grammostola rosea (Chilean rose tarantula).